A 146-amino-acid chain; its full sequence is Snaclec echicetin subunit beta (146 aa).

Positions 1–23 (MGRFISVSFGLLVLLLSLSGTGA) are cleaved as a signal peptide. 3 disulfide bridges follow: cysteine 25–cysteine 36, cysteine 53–cysteine 142, and cysteine 119–cysteine 134. The 112-residue stretch at 32 to 143 (YEGYCYKVFK…CTWTFSFVCK (112 aa)) folds into the C-type lectin domain.

Belongs to the snaclec family. In terms of assembly, heterodimer of subunits alpha and beta; disulfide-linked. In terms of tissue distribution, expressed by the venom gland.

It localises to the secreted. Its function is as follows. Binding of echicetin to glycoprotein Ibalpha (GP1BA) receptor on platelets alone results in inhibition of platelet aggregation, while binding to both GPIba receptor and IgMk promotes platelet aggregation and signal transduction. The sequence is that of Snaclec echicetin subunit beta from Echis carinatus (Saw-scaled viper).